We begin with the raw amino-acid sequence, 44 residues long: Protein PsbN (44 aa).

A helical transmembrane segment spans residues 6-26; it reads FFFTIFVWFLLISVTGYSIYV.

This sequence belongs to the PsbN family.

Its subcellular location is the plastid. It is found in the chloroplast thylakoid membrane. Its function is as follows. May play a role in photosystem I and II biogenesis. This is Protein PsbN from Bigelowiella natans (Pedinomonas minutissima).